We begin with the raw amino-acid sequence, 213 residues long: Response regulator GacA (213 aa).

The Response regulatory domain maps to 3-119; sequence RVLVVDDHDL…EMVQAIRLVF (117 aa). At D54 the chain carries 4-aspartylphosphate. In terms of domain architecture, HTH luxR-type spans 142 to 207; that stretch reads SDSPFDALSE…ELTLLAVRHG (66 aa). Residues 166-185 constitute a DNA-binding region (H-T-H motif); it reads VQIISDKLCLSPKTVNTYRY.

Phosphorylated by GacS.

Its function is as follows. Member of the two-component regulatory system GacA/GacS which controls the expression of secondary metabolites and extracellular products. Acts (probably primarily) by activating expression of CsrA1 and CsrA2 antagonist small RNAs (sRNA) RsmX, RsmY and RsmZ which bind to and prevent translation repression by CsrA1 and CsrA2. Involved in the regulation of secondary metabolism and in the synthesis of the antifungal factors cyanide, 2,4-diacetylphloroglucinol and pyoluteorin. Involved in synthesis of the autoinducing signal (unrelated to N-acylhomoserine lactones, induces the Gac/Csr cascade). Exercises positive post-transcriptional control over the hcnABC and aprA genes; acts upstream of CsrA2 (rsmA). Controls expression of csrA1 (rsmE) and csrA2. The chain is Response regulator GacA from Pseudomonas protegens (strain DSM 19095 / LMG 27888 / CFBP 6595 / CHA0).